A 139-amino-acid polypeptide reads, in one-letter code: Transcription antitermination protein NusB (139 aa).

It belongs to the NusB family.

Involved in transcription antitermination. Required for transcription of ribosomal RNA (rRNA) genes. Binds specifically to the boxA antiterminator sequence of the ribosomal RNA (rrn) operons. The protein is Transcription antitermination protein NusB of Pectobacterium carotovorum subsp. carotovorum (strain PC1).